The primary structure comprises 321 residues: uncharacterized protein (321 aa).

An ATP-binding site is contributed by 28-35 (GPINSGKT).

This sequence belongs to the archaeal ATPase family.

This is an uncharacterized protein from Pyrococcus horikoshii (strain ATCC 700860 / DSM 12428 / JCM 9974 / NBRC 100139 / OT-3).